A 64-amino-acid polypeptide reads, in one-letter code: MSSPTIPSRLYSLLFRRTSTFALTIAVGALFFERAFDQGADAIYEHINEGKLWKHIKHKYENKE.

Topologically, residues 2–18 (SSPTIPSRLYSLLFRRT) are mitochondrial matrix. A helical membrane pass occupies residues 19-43 (STFALTIAVGALFFERAFDQGADAI). The Mitochondrial intermembrane segment spans residues 44–63 (YEHINEGKLWKHIKHKYENK).

It belongs to the UQCR10/QCR9 family. Component of the ubiquinol-cytochrome c oxidoreductase (cytochrome b-c1 complex, complex III, CIII), a multisubunit enzyme composed of 11 subunits. The complex is composed of 3 respiratory subunits cytochrome b, cytochrome c1 and Rieske protein UQCRFS1, 2 core protein subunits UQCRC1/QCR1 and UQCRC2/QCR2, and 6 low-molecular weight protein subunits UQCRH/QCR6, UQCRB/QCR7, UQCRQ/QCR8, UQCR10/QCR9, UQCR11/QCR10 and subunit 9, the cleavage product of Rieske protein UQCRFS1. The complex exists as an obligatory dimer and forms supercomplexes (SCs) in the inner mitochondrial membrane with NADH-ubiquinone oxidoreductase (complex I, CI) and cytochrome c oxidase (complex IV, CIV), resulting in different assemblies (supercomplex SCI(1)III(2)IV(1) and megacomplex MCI(2)III(2)IV(2)). Interacts with STMP1.

It localises to the mitochondrion inner membrane. In terms of biological role, component of the ubiquinol-cytochrome c oxidoreductase, a multisubunit transmembrane complex that is part of the mitochondrial electron transport chain which drives oxidative phosphorylation. The respiratory chain contains 3 multisubunit complexes succinate dehydrogenase (complex II, CII), ubiquinol-cytochrome c oxidoreductase (cytochrome b-c1 complex, complex III, CIII) and cytochrome c oxidase (complex IV, CIV), that cooperate to transfer electrons derived from NADH and succinate to molecular oxygen, creating an electrochemical gradient over the inner membrane that drives transmembrane transport and the ATP synthase. The cytochrome b-c1 complex catalyzes electron transfer from ubiquinol to cytochrome c, linking this redox reaction to translocation of protons across the mitochondrial inner membrane, with protons being carried across the membrane as hydrogens on the quinol. In the process called Q cycle, 2 protons are consumed from the matrix, 4 protons are released into the intermembrane space and 2 electrons are passed to cytochrome c. The sequence is that of Cytochrome b-c1 complex subunit 9 (Uqcr10) from Mus musculus (Mouse).